The primary structure comprises 202 residues: Thymidylate kinase (202 aa).

ATP is bound at residue 7-14 (GIDGSGKT).

The protein belongs to the thymidylate kinase family.

It catalyses the reaction dTMP + ATP = dTDP + ADP. Phosphorylation of dTMP to form dTDP in both de novo and salvage pathways of dTTP synthesis. The chain is Thymidylate kinase from Ehrlichia canis (strain Jake).